The sequence spans 231 residues: Acyl-protein thioesterase 2 (231 aa).

A lipid anchor (S-palmitoyl cysteine) is attached at C2. Position 82 is a phosphoserine (S82). Active-site charge relay system residues include S122, D176, and H210.

Belongs to the AB hydrolase superfamily. AB hydrolase 2 family.

Its subcellular location is the cytoplasm. It catalyses the reaction S-hexadecanoyl-L-cysteinyl-[protein] + H2O = L-cysteinyl-[protein] + hexadecanoate + H(+). The catalysed reaction is prostaglandin E2 1-glyceryl ester + H2O = prostaglandin E2 + glycerol + H(+). The enzyme catalyses 1-hexadecanoyl-sn-glycero-3-phosphocholine + H2O = sn-glycerol 3-phosphocholine + hexadecanoate + H(+). It carries out the reaction 1-octadecanoyl-sn-glycero-3-phosphocholine + H2O = octadecanoate + sn-glycerol 3-phosphocholine + H(+). It catalyses the reaction 1-hexadecanoyl-sn-glycero-3-phosphate + H2O = sn-glycerol 3-phosphate + hexadecanoate + H(+). The catalysed reaction is 1-hexadecanoyl-sn-glycero-3-phospho-L-serine + H2O = sn-glycero-3-phospho-L-serine + hexadecanoate + H(+). In terms of biological role, acts as an acyl-protein thioesterase hydrolyzing fatty acids from S-acylated cysteine residues in proteins such as trimeric G alpha proteins, GSDMD, GAP43, ZDHHC6 or HRAS. Deacylates GAP43. Mediates depalmitoylation of ZDHHC6. Has lysophospholipase activity. Hydrolyzes prostaglandin glycerol esters (PG-Gs) in the following order prostaglandin D2-glycerol ester (PGD2-G) &gt; prostaglandin E2 glycerol ester (PGE2-G) &gt; prostaglandin F2-alpha-glycerol ester (PGF2-alpha-G). Hydrolyzes 1-arachidonoylglycerol but not 2-arachidonoylglycerol or arachidonoylethanolamide. The sequence is that of Acyl-protein thioesterase 2 (Lypla2) from Rattus norvegicus (Rat).